Here is a 270-residue protein sequence, read N- to C-terminus: Co-chaperone protein DjlA (270 aa).

Residues 1-6 (MQYWGK) are Periplasmic-facing. The chain crosses the membrane as a helical span at residues 7 to 31 (IIGVAVALMMGGGFWGVVLGLLVGH). The Cytoplasmic segment spans residues 32–270 (MFDKARSRKM…ELIKEQKGFK (239 aa)). A J domain is found at 204–270 (DACNVLGVKT…ELIKEQKGFK (67 aa)).

In terms of assembly, homodimer.

It localises to the cell inner membrane. In terms of biological role, regulatory DnaK co-chaperone. Direct interaction between DnaK and DjlA is needed for the induction of the wcaABCDE operon, involved in the synthesis of a colanic acid polysaccharide capsule, possibly through activation of the RcsB/RcsC phosphotransfer signaling pathway. The colanic acid capsule may help the bacterium survive conditions outside the host. This Salmonella paratyphi A (strain ATCC 9150 / SARB42) protein is Co-chaperone protein DjlA.